The primary structure comprises 458 residues: Transmembrane protein 135 (458 aa).

Transmembrane regions (helical) follow at residues 68-88 (ILQS…FFCI), 96-116 (FYSW…AILI), 149-169 (TLRN…MFFF), 298-318 (FQLG…SCFL), 331-351 (IVAG…TISM), and 377-397 (ADTI…VMEV).

The protein belongs to the TMEM135 family.

The protein localises to the mitochondrion membrane. It localises to the peroxisome membrane. Involved in mitochondrial metabolism by regulating the balance between mitochondrial fusion and fission. May act as a regulator of mitochondrial fission that promotes DNM1L-dependent fission through activation of DNM1L. May be involved in peroxisome organization. This chain is Transmembrane protein 135, found in Mus musculus (Mouse).